A 98-amino-acid polypeptide reads, in one-letter code: uncharacterized protein (98 aa).

Positions Ser77 to His98 are disordered.

The protein to M.tuberculosis Rv1991c and Rv3269.

This is an uncharacterized protein from Mycobacterium bovis (strain ATCC BAA-935 / AF2122/97).